Here is a 300-residue protein sequence, read N- to C-terminus: 4-hydroxy-tetrahydrodipicolinate synthase (300 aa).

Position 54 (Thr54) interacts with pyruvate. Tyr142 serves as the catalytic Proton donor/acceptor. Lys170 (schiff-base intermediate with substrate) is an active-site residue. Ile212 contacts pyruvate.

This sequence belongs to the DapA family. Homotetramer; dimer of dimers.

It localises to the cytoplasm. The enzyme catalyses L-aspartate 4-semialdehyde + pyruvate = (2S,4S)-4-hydroxy-2,3,4,5-tetrahydrodipicolinate + H2O + H(+). Its pathway is amino-acid biosynthesis; L-lysine biosynthesis via DAP pathway; (S)-tetrahydrodipicolinate from L-aspartate: step 3/4. Its function is as follows. Catalyzes the condensation of (S)-aspartate-beta-semialdehyde [(S)-ASA] and pyruvate to 4-hydroxy-tetrahydrodipicolinate (HTPA). The sequence is that of 4-hydroxy-tetrahydrodipicolinate synthase from Halorhodospira halophila (strain DSM 244 / SL1) (Ectothiorhodospira halophila (strain DSM 244 / SL1)).